A 437-amino-acid polypeptide reads, in one-letter code: Anhydromevalonate phosphate decarboxylase (437 aa).

The Mn(2+) site is built by Asn-136 and Glu-199. The active-site Proton acceptor is the Asp-247.

It belongs to the UbiD family. Requires prenylated FMN as cofactor. Mn(2+) serves as cofactor.

The catalysed reaction is (2E)-3-methyl-5-phosphooxypent-2-enoate + H(+) = isopentenyl phosphate + CO2. It functions in the pathway isoprenoid biosynthesis; isopentenyl diphosphate biosynthesis via mevalonate pathway. Functionally, catalyzes the conversion of trans-anhydromevalonate 5-phosphate (tAHMP) into isopentenyl phosphate. Involved in the archaeal mevalonate (MVA) pathway, which provides fundamental precursors for isoprenoid biosynthesis, such as isopentenyl diphosphate (IPP) and dimethylallyl diphosphate (DMAPP). The chain is Anhydromevalonate phosphate decarboxylase from Aeropyrum pernix (strain ATCC 700893 / DSM 11879 / JCM 9820 / NBRC 100138 / K1).